We begin with the raw amino-acid sequence, 205 residues long: Small ribosomal subunit protein uS4 (205 aa).

Residues isoleucine 19 to leucine 45 form a disordered region. Positions serine 94–valine 157 constitute an S4 RNA-binding domain.

It belongs to the universal ribosomal protein uS4 family. In terms of assembly, part of the 30S ribosomal subunit. Contacts protein S5. The interaction surface between S4 and S5 is involved in control of translational fidelity.

Its function is as follows. One of the primary rRNA binding proteins, it binds directly to 16S rRNA where it nucleates assembly of the body of the 30S subunit. With S5 and S12 plays an important role in translational accuracy. In Brucella suis biovar 1 (strain 1330), this protein is Small ribosomal subunit protein uS4.